The primary structure comprises 129 residues: Small ribosomal subunit protein uS11 (129 aa).

This sequence belongs to the universal ribosomal protein uS11 family. As to quaternary structure, part of the 30S ribosomal subunit. Interacts with proteins S7 and S18. Binds to IF-3.

In terms of biological role, located on the platform of the 30S subunit, it bridges several disparate RNA helices of the 16S rRNA. Forms part of the Shine-Dalgarno cleft in the 70S ribosome. This Staphylococcus carnosus (strain TM300) protein is Small ribosomal subunit protein uS11.